The sequence spans 157 residues: Dihydrofolate reductase type 6 (157 aa).

A DHFR domain is found at 2-156; it reads KISLMAAVSE…IDYTYQIWAK (155 aa).

This sequence belongs to the dihydrofolate reductase family. As to quaternary structure, homodimer.

It catalyses the reaction (6S)-5,6,7,8-tetrahydrofolate + NADP(+) = 7,8-dihydrofolate + NADPH + H(+). Its pathway is cofactor biosynthesis; tetrahydrofolate biosynthesis; 5,6,7,8-tetrahydrofolate from 7,8-dihydrofolate: step 1/1. Its function is as follows. Key enzyme in folate metabolism. Catalyzes an essential reaction for de novo glycine and purine synthesis, and for DNA precursor synthesis. The protein is Dihydrofolate reductase type 6 (dhfrVI) of Proteus mirabilis.